The sequence spans 265 residues: Probable autolysin SsaALP (265 aa).

An N-terminal signal peptide occupies residues methionine 1–alanine 25. 2 consecutive LysM domains span residues threonine 27–valine 70 and serine 89–isoleucine 132. Residues glycine 72 to threonine 92 form a disordered region. Residues aspartate 74–threonine 92 are compositionally biased toward polar residues. One can recognise a Peptidase C51 domain in the interval threonine 141–histidine 265.

The catalysed reaction is Hydrolyzes the link between N-acetylmuramoyl residues and L-amino acid residues in certain cell-wall glycopeptides.. Has weak lytic activity toward S.aureus cells. This chain is Probable autolysin SsaALP, found in Staphylococcus aureus (strain NCTC 8325 / PS 47).